Consider the following 366-residue polypeptide: Peptide chain release factor 1 (366 aa).

An N5-methylglutamine modification is found at Q230. Basic and acidic residues-rich tracts occupy residues 283–293 and 315–328; these read ARDAQEARDRA and VTDH…KNHP. The segment at 283–335 is disordered; that stretch reads ARDAQEARDRAAQVGSGERSEKIRTYNYPQNRVTDHRLEGDSKNHPLDSVMAG.

This sequence belongs to the prokaryotic/mitochondrial release factor family. In terms of processing, methylated by PrmC. Methylation increases the termination efficiency of RF1.

The protein resides in the cytoplasm. Its function is as follows. Peptide chain release factor 1 directs the termination of translation in response to the peptide chain termination codons UAG and UAA. This chain is Peptide chain release factor 1, found in Deinococcus deserti (strain DSM 17065 / CIP 109153 / LMG 22923 / VCD115).